The sequence spans 405 residues: Probable tRNA sulfurtransferase (405 aa).

One can recognise a THUMP domain in the interval 60-165; it reads DQVMARLSQV…REAIYLSTKT (106 aa). ATP is bound by residues 183-184, 208-209, arginine 265, glycine 287, and glutamine 296; these read ML and HF.

The protein belongs to the ThiI family.

Its subcellular location is the cytoplasm. It carries out the reaction [ThiI sulfur-carrier protein]-S-sulfanyl-L-cysteine + a uridine in tRNA + 2 reduced [2Fe-2S]-[ferredoxin] + ATP + H(+) = [ThiI sulfur-carrier protein]-L-cysteine + a 4-thiouridine in tRNA + 2 oxidized [2Fe-2S]-[ferredoxin] + AMP + diphosphate. The catalysed reaction is [ThiS sulfur-carrier protein]-C-terminal Gly-Gly-AMP + S-sulfanyl-L-cysteinyl-[cysteine desulfurase] + AH2 = [ThiS sulfur-carrier protein]-C-terminal-Gly-aminoethanethioate + L-cysteinyl-[cysteine desulfurase] + A + AMP + 2 H(+). It functions in the pathway cofactor biosynthesis; thiamine diphosphate biosynthesis. In terms of biological role, catalyzes the ATP-dependent transfer of a sulfur to tRNA to produce 4-thiouridine in position 8 of tRNAs, which functions as a near-UV photosensor. Also catalyzes the transfer of sulfur to the sulfur carrier protein ThiS, forming ThiS-thiocarboxylate. This is a step in the synthesis of thiazole, in the thiamine biosynthesis pathway. The sulfur is donated as persulfide by IscS. In Lacticaseibacillus casei (strain BL23) (Lactobacillus casei), this protein is Probable tRNA sulfurtransferase.